The chain runs to 231 residues: MRSVLYLLFTAVAAVAALENPFLVPPGGYQFNTREPTVLNWQPTTPGTVTLKLQMSSDITPHSGLVLAAHLENTGTFTFLPPPDLMQNGLYTVQIIDDNDPSKYNFTPSFMVDGATGGPTTGPTTSRTSMTTSEATTTSGESTTSPSSTRPSTVSPTTTDSSDTTMSTVTSSSTPTTTDSTTTSESTAVSSTRSSSTGMPTSSGAPDPNGAVSLALPGGLLSIVLSLMALL.

The signal sequence occupies residues 1–17 (MRSVLYLLFTAVAAVAA). Residues 107-206 (TPSFMVDGAT…TGMPTSSGAP (100 aa)) form a disordered region. Residues 121 to 204 (TGPTTSRTSM…SSTGMPTSSG (84 aa)) are compositionally biased toward low complexity. S203 carries the GPI-anchor amidated serine lipid modification. Residues 204-231 (GAPDPNGAVSLALPGGLLSIVLSLMALL) constitute a propeptide, removed in mature form.

This sequence belongs to the SRP1/TIP1 family. In terms of processing, the GPI-anchor is attached to the protein in the endoplasmic reticulum and serves to target the protein to the cell surface. There, the glucosamine-inositol phospholipid moiety is cleaved off and the GPI-modified mannoprotein is covalently attached via its lipidless GPI glycan remnant to the 1,6-beta-glucan of the outer cell wall layer.

The protein resides in the cell membrane. It is found in the secreted. The protein localises to the cell wall. Functionally, probable component of the cell wall. This is Probable cell wall protein ARB_06477 from Arthroderma benhamiae (strain ATCC MYA-4681 / CBS 112371) (Trichophyton mentagrophytes).